The sequence spans 264 residues: tRNA pseudouridine synthase A (264 aa).

The Nucleophile role is filled by Asp-51. Residue Tyr-109 coordinates substrate.

It belongs to the tRNA pseudouridine synthase TruA family. As to quaternary structure, homodimer.

The catalysed reaction is uridine(38/39/40) in tRNA = pseudouridine(38/39/40) in tRNA. Its function is as follows. Formation of pseudouridine at positions 38, 39 and 40 in the anticodon stem and loop of transfer RNAs. The polypeptide is tRNA pseudouridine synthase A (Pasteurella multocida (strain Pm70)).